The sequence spans 156 residues: Cytochrome c-type biogenesis protein CcmE (156 aa).

Residues 1–7 are Cytoplasmic-facing; that stretch reads MTRRQRR. The helical; Signal-anchor for type II membrane protein transmembrane segment at 8–28 threads the bilayer; sequence LGILLAALVCAGAATALTLNA. Over 29–156 the chain is Periplasmic; that stretch reads FRSNLVFFFS…AKESARSASR (128 aa). Heme is bound by residues histidine 123 and tyrosine 127.

The protein belongs to the CcmE/CycJ family.

The protein resides in the cell inner membrane. Heme chaperone required for the biogenesis of c-type cytochromes. Transiently binds heme delivered by CcmC and transfers the heme to apo-cytochromes in a process facilitated by CcmF and CcmH. The sequence is that of Cytochrome c-type biogenesis protein CcmE from Ralstonia pickettii (strain 12J).